The following is a 766-amino-acid chain: Signal transducer and activator of transcription 3.2 (766 aa).

The short motif at D150–M162 is the Essential for nuclear import element. The 91-residue stretch at W580–L670 folds into the SH2 domain. The residue at position 725 (S725) is a Phosphoserine; by NLK.

This sequence belongs to the transcription factor STAT family. In terms of assembly, forms a homodimer or a heterodimer with a related family member. Interacts with nlk.2. In terms of processing, phosphorylation of both tyrosine and serine residues, together with dimerization, is required for mesoderm induction.

It is found in the cytoplasm. Its subcellular location is the nucleus. Transcription factor that binds to target promoter sequences and activates transcription upon il6st/gp130 stimulation. Mediates ventralization of embryos, at least in part via inhibition of smad2 signaling. Required for hairy2 to induce dll1/delta1 and promote neural crest cell proliferation and differentiation. Involved in TGFbeta-mediated mesoderm induction in early embryos, acting downstream of map3k7/tak1 and nlk.2. In Xenopus laevis (African clawed frog), this protein is Signal transducer and activator of transcription 3.2 (stat3.2).